A 235-amino-acid polypeptide reads, in one-letter code: Heme oxygenase (235 aa).

Position 19 (His-19) interacts with heme b.

The protein belongs to the heme oxygenase family.

It localises to the plastid. Its subcellular location is the chloroplast. The enzyme catalyses heme b + 3 reduced [NADPH--hemoprotein reductase] + 3 O2 = biliverdin IXalpha + CO + Fe(2+) + 3 oxidized [NADPH--hemoprotein reductase] + 3 H2O + H(+). Its function is as follows. Catalyzes the opening of the heme ring with the release of iron. Key enzyme in the synthesis of the chromophoric part of the photosynthetic antennae. The protein is Heme oxygenase (pbsA) of Rhodella violacea (Red alga).